Here is a 196-residue protein sequence, read N- to C-terminus: ATP-dependent Clp protease proteolytic subunit (196 aa).

Residue Ser96 is the Nucleophile of the active site. His121 is an active-site residue.

This sequence belongs to the peptidase S14 family. As to quaternary structure, fourteen ClpP subunits assemble into 2 heptameric rings which stack back to back to give a disk-like structure with a central cavity, resembling the structure of eukaryotic proteasomes.

The protein localises to the cytoplasm. It catalyses the reaction Hydrolysis of proteins to small peptides in the presence of ATP and magnesium. alpha-casein is the usual test substrate. In the absence of ATP, only oligopeptides shorter than five residues are hydrolyzed (such as succinyl-Leu-Tyr-|-NHMec, and Leu-Tyr-Leu-|-Tyr-Trp, in which cleavage of the -Tyr-|-Leu- and -Tyr-|-Trp bonds also occurs).. Its function is as follows. Cleaves peptides in various proteins in a process that requires ATP hydrolysis. Has a chymotrypsin-like activity. Plays a major role in the degradation of misfolded proteins. The protein is ATP-dependent Clp protease proteolytic subunit of Streptococcus uberis (strain ATCC BAA-854 / 0140J).